The primary structure comprises 375 residues: 23S rRNA (uracil(747)-C(5))-methyltransferase RlmC (375 aa).

The [4Fe-4S] cluster site is built by C3, C11, C14, and C87. S-adenosyl-L-methionine-binding residues include Q212, F241, E262, and N307. Residue C334 is the Nucleophile of the active site.

The protein belongs to the class I-like SAM-binding methyltransferase superfamily. RNA M5U methyltransferase family. RlmC subfamily.

It catalyses the reaction uridine(747) in 23S rRNA + S-adenosyl-L-methionine = 5-methyluridine(747) in 23S rRNA + S-adenosyl-L-homocysteine + H(+). Catalyzes the formation of 5-methyl-uridine at position 747 (m5U747) in 23S rRNA. This chain is 23S rRNA (uracil(747)-C(5))-methyltransferase RlmC, found in Shigella boydii serotype 18 (strain CDC 3083-94 / BS512).